The chain runs to 485 residues: Glutamate--tRNA ligase (485 aa).

The 'HIGH' region motif lies at P12 to T22. Residues C109, C111, C136, and H138 each contribute to the Zn(2+) site. The 'KMSKS' region motif lies at K253–R257. Residue K256 coordinates ATP.

The protein belongs to the class-I aminoacyl-tRNA synthetase family. Glutamate--tRNA ligase type 1 subfamily. In terms of assembly, monomer. The cofactor is Zn(2+).

Its subcellular location is the cytoplasm. It catalyses the reaction tRNA(Glu) + L-glutamate + ATP = L-glutamyl-tRNA(Glu) + AMP + diphosphate. In terms of biological role, catalyzes the attachment of glutamate to tRNA(Glu) in a two-step reaction: glutamate is first activated by ATP to form Glu-AMP and then transferred to the acceptor end of tRNA(Glu). The sequence is that of Glutamate--tRNA ligase from Agrobacterium fabrum (strain C58 / ATCC 33970) (Agrobacterium tumefaciens (strain C58)).